Reading from the N-terminus, the 450-residue chain is Probable 1,4-beta-D-glucan cellobiohydrolase C (450 aa).

Residues 1-19 (MKHLASSIALTLLLPAVQA) form the signal peptide. The CBM1 domain maps to 20 to 55 (QQTVWGQCGGQGWSGPTNCVAGAACSTLNPYYAQCI). 2 disulfides stabilise this stretch: Cys-27-Cys-44 and Cys-38-Cys-54. The tract at residues 59-90 (TATSTTLSTTTTTQTTTKPTTTGPTTSAPTVT) is thr-rich linker. The disordered stretch occupies residues 63 to 89 (TTLSTTTTTQTTTKPTTTGPTTSAPTV). The interval 91–450 (ASGNPFSGYQ…QLLTNANPSF (360 aa)) is catalytic. Asp-180 is a catalytic residue. Cystine bridges form between Cys-181-Cys-240 and Cys-372-Cys-419. Asp-226 serves as the catalytic Proton donor. Residue Asp-405 is the Nucleophile of the active site. Asn-409 carries an N-linked (GlcNAc...) asparagine glycan.

It belongs to the glycosyl hydrolase 6 (cellulase B) family.

Its subcellular location is the secreted. The catalysed reaction is Hydrolysis of (1-&gt;4)-beta-D-glucosidic linkages in cellulose and cellotetraose, releasing cellobiose from the non-reducing ends of the chains.. Its function is as follows. The biological conversion of cellulose to glucose generally requires three types of hydrolytic enzymes: (1) Endoglucanases which cut internal beta-1,4-glucosidic bonds; (2) Exocellobiohydrolases that cut the disaccharide cellobiose from the non-reducing end of the cellulose polymer chain; (3) Beta-1,4-glucosidases which hydrolyze the cellobiose and other short cello-oligosaccharides to glucose. This Neosartorya fischeri (strain ATCC 1020 / DSM 3700 / CBS 544.65 / FGSC A1164 / JCM 1740 / NRRL 181 / WB 181) (Aspergillus fischerianus) protein is Probable 1,4-beta-D-glucan cellobiohydrolase C (cbhC).